The chain runs to 196 residues: Rho-related protein racL (196 aa).

10–17 (GDGAVGKT) lines the GTP pocket. The Effector region motif lies at 32 to 40 (YQPTVFDNF). GTP-binding positions include 57–61 (DTAGQ) and 116–119 (TQND). Cysteine methyl ester is present on Cys193. A lipid anchor (S-geranylgeranyl cysteine) is attached at Cys193. A propeptide spans 194–196 (IIL) (removed in mature form).

This sequence belongs to the small GTPase superfamily. Rho family.

It localises to the cell membrane. This chain is Rho-related protein racL (racL), found in Dictyostelium discoideum (Social amoeba).